Consider the following 401-residue polypeptide: Succinyl-diaminopimelate desuccinylase (401 aa).

Position 82 (His82) interacts with Zn(2+). Asp84 is a catalytic residue. Asp115 lines the Zn(2+) pocket. The active-site Proton acceptor is the Glu149. Zn(2+) contacts are provided by Glu150, Glu178, and His364.

This sequence belongs to the peptidase M20A family. DapE subfamily. As to quaternary structure, homodimer. Zn(2+) is required as a cofactor. The cofactor is Co(2+).

It catalyses the reaction N-succinyl-(2S,6S)-2,6-diaminopimelate + H2O = (2S,6S)-2,6-diaminopimelate + succinate. It participates in amino-acid biosynthesis; L-lysine biosynthesis via DAP pathway; LL-2,6-diaminopimelate from (S)-tetrahydrodipicolinate (succinylase route): step 3/3. Functionally, catalyzes the hydrolysis of N-succinyl-L,L-diaminopimelic acid (SDAP), forming succinate and LL-2,6-diaminopimelate (DAP), an intermediate involved in the bacterial biosynthesis of lysine and meso-diaminopimelic acid, an essential component of bacterial cell walls. This Verminephrobacter eiseniae (strain EF01-2) protein is Succinyl-diaminopimelate desuccinylase.